An 81-amino-acid chain; its full sequence is MSADEVYSRVRKIVSDQLGVEDDKVTLEANFQNDLGADSLDTVELVMAFEEEFDLEIPDEDAEGIATVQDAVNYILSKKAA.

Residues 4 to 79 (DEVYSRVRKI…DAVNYILSKK (76 aa)) enclose the Carrier domain. An O-(pantetheine 4'-phosphoryl)serine modification is found at Ser-39.

This sequence belongs to the acyl carrier protein (ACP) family. Post-translationally, 4'-phosphopantetheine is transferred from CoA to a specific serine of apo-ACP by AcpS. This modification is essential for activity because fatty acids are bound in thioester linkage to the sulfhydryl of the prosthetic group.

It is found in the cytoplasm. It participates in lipid metabolism; fatty acid biosynthesis. Functionally, carrier of the growing fatty acid chain in fatty acid biosynthesis. The polypeptide is Acyl carrier protein (Synechococcus sp. (strain JA-3-3Ab) (Cyanobacteria bacterium Yellowstone A-Prime)).